Consider the following 62-residue polypeptide: Toxin Tb2-II (62 aa).

One can recognise an LCN-type CS-alpha/beta domain in the interval 1-62 (KEGYAMDHEG…KVWDYATNKC (62 aa)). Disulfide bonds link Cys11/Cys62, Cys15/Cys38, Cys23/Cys43, and Cys27/Cys45.

Belongs to the long (4 C-C) scorpion toxin superfamily. Sodium channel inhibitor family. Beta subfamily. As to expression, expressed by the venom gland.

Its subcellular location is the secreted. Its function is as follows. Beta toxins bind voltage-independently at site-4 of sodium channels (Nav) and shift the voltage of activation toward more negative potentials thereby affecting sodium channel activation and promoting spontaneous and repetitive firing. This toxin is active against both mammals and insects. The polypeptide is Toxin Tb2-II (Tityus bahiensis (Brazilian scorpion)).